The sequence spans 121 residues: Small ribosomal subunit protein uS13 (121 aa).

The tract at residues 88–121 is disordered; that stretch reads GMRHRRGLPTRGQNTKNNARTRKGPAKSIAGKKK. A compositionally biased stretch (basic residues) spans 106-121; the sequence is ARTRKGPAKSIAGKKK.

Belongs to the universal ribosomal protein uS13 family. Part of the 30S ribosomal subunit. Forms a loose heterodimer with protein S19. Forms two bridges to the 50S subunit in the 70S ribosome.

Located at the top of the head of the 30S subunit, it contacts several helices of the 16S rRNA. In the 70S ribosome it contacts the 23S rRNA (bridge B1a) and protein L5 of the 50S subunit (bridge B1b), connecting the 2 subunits; these bridges are implicated in subunit movement. Contacts the tRNAs in the A and P-sites. In Lactococcus lactis subsp. cremoris (strain MG1363), this protein is Small ribosomal subunit protein uS13.